An 873-amino-acid polypeptide reads, in one-letter code: Aminopeptidase M1-D (873 aa).

The segment at 96–203 is required for membrane association; sequence LGEGVLAMRF…MSTYLVAIVV (108 aa). Residues Glu-136 and 269 to 273 contribute to the substrate site; that span reads GAMEN. Residue His-305 participates in Zn(2+) binding. The active-site Proton acceptor is Glu-306. His-309 and Glu-328 together coordinate Zn(2+). The Dileucine internalization motif motif lies at 721 to 722; it reads LL.

It belongs to the peptidase M1 family. In terms of assembly, homodimer. It depends on Zn(2+) as a cofactor.

Its subcellular location is the membrane. The protein resides in the microsome membrane. The protein localises to the cytoplasm. The enzyme catalyses Release of an N-terminal amino acid, Xaa-|-Yaa- from a peptide, amide or arylamide. Xaa is preferably Ala, but may be most amino acids including Pro (slow action). When a terminal hydrophobic residue is followed by a prolyl residue, the two may be released as an intact Xaa-Pro dipeptide.. This chain is Aminopeptidase M1-D, found in Oryza sativa subsp. japonica (Rice).